Consider the following 507-residue polypeptide: Cytochrome P450 monooxygenase helB3 (507 aa).

The signal sequence occupies residues 1-25 (MAVATLISILFAVLALRLCYLLIHA). N-linked (GlcNAc...) asparagine glycans are attached at residues asparagine 111, asparagine 206, and asparagine 339. Cysteine 435 is a binding site for heme.

Belongs to the cytochrome P450 family. Heme is required as a cofactor.

The protein operates within mycotoxin biosynthesis. Functionally, cytochrome P450 monooxygenase; part of the gene cluster that mediates the biosynthesis of helvolic acid, an antibacterial nortriterpenoid. Protostadienol synthase helA cyclizes (3S)-oxidosqualene to (17Z)-protosta-17(20),24-dien-3-beta-ol (protostadienol). The synthesis of protostadienol is followed by several steps of monooxygenation, dehydrogenation, and acyl transfer to yield the final helvolic acid. Following the cyclization to the tetracyclic protostadienol by helA, cytochrome P450 monooxygenases helB1-mediated and helB2-mediated oxidation at C-4 and C-16, acyltransferase helD2-dependent acetylation of 16-OH, oxidation of C-21 by cytochrome P450 monooxygenase helB4, and short chain dehydrogenase helC-dependent oxidative decarboxylation yield the fusidane skeleton. This intermediate is further modified in three additional steps mediated by the cytochrome P450 monooxygenase helB3, the acyltransferase helD1, and the 3-ketosteroid 1-dehydrogenase helE to give helvolic acid. Compared with the late stages in the biosynthesis of helvolic acid, enzymes involved in the early stage modifications act in a relatively strict order. The hydroxylation of C-16 by helB1 and subsequent acetylation by helD2 should occur before the helB3-mediated oxidation of C-21. C-4 demethylation in fusidane-type antibiotics proceeds in an unusual manner though it is also achieved by oxidative decarboxylation. The methyl group at C-4 beta position is oxidized by helB1 and subsequently removed by the short chain dehydrogenase helC. This chain is Cytochrome P450 monooxygenase helB3, found in Aspergillus fumigatus (strain ATCC MYA-4609 / CBS 101355 / FGSC A1100 / Af293) (Neosartorya fumigata).